Reading from the N-terminus, the 290-residue chain is 4-hydroxybenzoate octaprenyltransferase (290 aa).

8 consecutive transmembrane segments (helical) span residues 21-41, 44-64, 84-104, 106-126, 142-162, 212-232, 235-255, and 267-287; these read IGTL…VKGM, LSIL…GCVI, LATG…LVFC, FILV…AVFL, LFLG…SIEA, IISL…YLSQ, TSYF…CKLI, and FLNN…GIFF.

This sequence belongs to the UbiA prenyltransferase family. Requires Mg(2+) as cofactor.

The protein resides in the cell inner membrane. It catalyses the reaction all-trans-octaprenyl diphosphate + 4-hydroxybenzoate = 4-hydroxy-3-(all-trans-octaprenyl)benzoate + diphosphate. The protein operates within cofactor biosynthesis; ubiquinone biosynthesis. Catalyzes the prenylation of para-hydroxybenzoate (PHB) with an all-trans polyprenyl group. Mediates the second step in the final reaction sequence of ubiquinone-8 (UQ-8) biosynthesis, which is the condensation of the polyisoprenoid side chain with PHB, generating the first membrane-bound Q intermediate 3-octaprenyl-4-hydroxybenzoate. The polypeptide is 4-hydroxybenzoate octaprenyltransferase (Pasteurella multocida (strain Pm70)).